We begin with the raw amino-acid sequence, 457 residues long: Secreted RxLR effector protein 8 (457 aa).

The signal sequence occupies residues 1 to 19; the sequence is MRGTLATALLLVISSRVAT. The short motif at 48-69 is the RxLR-dEER element; that stretch reads RFLRGSRKQRDDLAPTAADENR. N-linked (GlcNAc...) asparagine glycosylation occurs at N68. Disordered regions lie at residues 110-188 and 398-457; these read RLSL…ALKS and RQTI…RSSS. Residues 135 to 152 are compositionally biased toward low complexity; that stretch reads SASTSTTSDIATSSSRTS. Composition is skewed to polar residues over residues 153–163 and 176–187; these read NQRTPKTQASL and SKNQFKKSTALK. Positions 442-457 are enriched in basic residues; sequence IKSKDHARKKRPRSSS.

Belongs to the RxLR effector family.

The protein localises to the secreted. The protein resides in the host nucleus. Functionally, secreted effector that completely suppresses the host cell death induced by cell death-inducing proteins. This is Secreted RxLR effector protein 8 from Plasmopara viticola (Downy mildew of grapevine).